The following is a 233-amino-acid chain: MIFPSPLTEARLIRRYKRFLADVVLADGTELTVSVPNTGSMLGLTAPGSRVLLSKWDDPKRKYPYRLEIVEADGTLVGINTGLPNRLAAEAIRARLVGDLGTYPVIRPEQRYGERSRIDFLLEHPERPPAYVEVKNVHFMREAGLAEFPDTRTDRGARHLDELAAMRRAGNRAVMIYVVQRADCSRFRLCADLDASYAAAFGRARDAGVEAFVIGCQISADAIAPDRLIDLDF.

Belongs to the SfsA family.

In Chelativorans sp. (strain BNC1), this protein is Sugar fermentation stimulation protein homolog.